A 336-amino-acid chain; its full sequence is Iron(3+)-hydroxamate import system permease protein FhuG (336 aa).

The next 9 membrane-spanning stretches (helical) occupy residues 9 to 29 (LIVMAVTFLLIVVVFFISLNL), 63 to 83 (IILSLLVGAGISVAGAILQSV), 91 to 111 (PGILGINAGGSLAVVLFIYFF), 124 to 144 (FMLPFSALAGAILAAFLIYIL), 155 to 175 (LILVGIGVNAGFNALLLIFQL), 193 to 213 (IWGANWNMIWAILPWIVILLL), 245 to 265 (ILLLAAVTLAASCVAAAGGIA), 285 to 305 (TLIPVSAFIGSFLFLLADTLA), and 313 to 333 (EIPVGLVISVLGAPYFIYLLM).

The protein belongs to the binding-protein-dependent transport system permease family. FecCD subfamily. The complex is composed of an ATP-binding protein (FhuC), two transmembrane proteins (FhuB and FhuG) and a solute-binding protein (FhuD or YxeB).

The protein resides in the cell membrane. Its function is as follows. Part of the ABC transporter complex FhuBGCD involved in iron(3+)-hydroxamate import. Responsible for the translocation of the substrate across the membrane. The chain is Iron(3+)-hydroxamate import system permease protein FhuG (fhuG) from Bacillus subtilis (strain 168).